Consider the following 563-residue polypeptide: Arginine--tRNA ligase (563 aa).

Residues 121-131 (PNIAKPFSIGH) carry the 'HIGH' region motif.

The protein belongs to the class-I aminoacyl-tRNA synthetase family. In terms of assembly, monomer.

The protein resides in the cytoplasm. The catalysed reaction is tRNA(Arg) + L-arginine + ATP = L-arginyl-tRNA(Arg) + AMP + diphosphate. The polypeptide is Arginine--tRNA ligase (Streptococcus pyogenes serotype M1).